The following is a 329-amino-acid chain: NTD biosynthesis operon regulator NtdR (329 aa).

In terms of domain architecture, HTH lacI-type spans 2–56; that stretch reads PTIDEIAKLCNVSKTTVSRVLNNHPYVSKEKRDMILKAINELDYTPNYLARNFRR. The segment at residues 4 to 23 is a DNA-binding region (H-T-H motif); it reads IDEIAKLCNVSKTTVSRVLN.

Its function is as follows. Positively regulates the ntdABC operon and negatively regulates its own transcription. Binds to NTD to induce ntdABC transcription. In Bacillus subtilis (strain 168), this protein is NTD biosynthesis operon regulator NtdR (ntdR).